Reading from the N-terminus, the 125-residue chain is Phosphoribosyl-AMP cyclohydrolase (125 aa).

Asp-74 contacts Mg(2+). Cys-75 is a binding site for Zn(2+). Residues Asp-76 and Asp-78 each contribute to the Mg(2+) site. Positions 92 and 99 each coordinate Zn(2+).

Belongs to the PRA-CH family. As to quaternary structure, homodimer. It depends on Mg(2+) as a cofactor. The cofactor is Zn(2+).

It localises to the cytoplasm. The enzyme catalyses 1-(5-phospho-beta-D-ribosyl)-5'-AMP + H2O = 1-(5-phospho-beta-D-ribosyl)-5-[(5-phospho-beta-D-ribosylamino)methylideneamino]imidazole-4-carboxamide. It functions in the pathway amino-acid biosynthesis; L-histidine biosynthesis; L-histidine from 5-phospho-alpha-D-ribose 1-diphosphate: step 3/9. Functionally, catalyzes the hydrolysis of the adenine ring of phosphoribosyl-AMP. This is Phosphoribosyl-AMP cyclohydrolase from Syntrophotalea carbinolica (strain DSM 2380 / NBRC 103641 / GraBd1) (Pelobacter carbinolicus).